A 531-amino-acid chain; its full sequence is Nuclear RNA export factor 3 (531 aa).

Disordered stretches follow at residues 33-59 (RSEP…HGAH) and 83-106 (QDQT…GNMP). Over residues 41 to 50 (MHSSSHQQQD) the composition is skewed to polar residues. The segment covering 83–102 (QDQTHVNMEREQKPPERRME) has biased composition (basic and acidic residues). The 80-residue stretch at 113–192 (WFKITVPFGI…IFVNPAGIPH (80 aa)) folds into the RRM domain. One can recognise an NTF2 domain in the interval 344 to 494 (LVLQFLQQYY…LCIVNDKLFV (151 aa)).

Belongs to the NXF family. Interacts with NXT1, NXT2, E1B-AP5 and CRM1 nuclear export factor. As to expression, expressed at high level in testis and at low level in a small number of tissues.

It localises to the nucleus. It is found in the cytoplasm. In terms of biological role, may function as a tissue-specific nuclear mRNA export factor. In Homo sapiens (Human), this protein is Nuclear RNA export factor 3 (NXF3).